The sequence spans 360 residues: Dihydroorotate dehydrogenase (quinone) (360 aa).

Residues 60-64 (AGFDK) and Thr-84 contribute to the FMN site. Lys-64 contacts substrate. 109 to 113 (NRMGF) is a binding site for substrate. FMN is bound by residues Asn-137 and Asn-168. A substrate-binding site is contributed by Asn-168. The active-site Nucleophile is Ser-171. Residue Asn-173 coordinates substrate. Residues Lys-213 and Ser-241 each contribute to the FMN site. 242–243 (NT) serves as a coordination point for substrate. FMN is bound by residues Gly-264, Gly-293, and 314-315 (YS).

This sequence belongs to the dihydroorotate dehydrogenase family. Type 2 subfamily. Monomer. FMN is required as a cofactor.

Its subcellular location is the cell membrane. It carries out the reaction (S)-dihydroorotate + a quinone = orotate + a quinol. It participates in pyrimidine metabolism; UMP biosynthesis via de novo pathway; orotate from (S)-dihydroorotate (quinone route): step 1/1. Its function is as follows. Catalyzes the conversion of dihydroorotate to orotate with quinone as electron acceptor. This Bartonella tribocorum (strain CIP 105476 / IBS 506) protein is Dihydroorotate dehydrogenase (quinone).